A 163-amino-acid polypeptide reads, in one-letter code: Nucleotide-binding protein Spro_1084 (163 aa).

This sequence belongs to the YajQ family.

In terms of biological role, nucleotide-binding protein. The sequence is that of Nucleotide-binding protein Spro_1084 from Serratia proteamaculans (strain 568).